Here is a 289-residue protein sequence, read N- to C-terminus: Coiled-coil domain-containing protein 137 (289 aa).

3 disordered regions span residues 1–64 (MAGA…QEIP), 149–184 (EVQAAPKEKSEQKKAKKAFQKRRLDKVRRKKEEKAA), and 204–225 (QPPELTARPQRSVSKDQPGRRS). The span at 7 to 20 (GAAVSRVQAGPGSP) shows a compositional bias: low complexity. At serine 19 the chain carries Phosphoserine. Residues 155–197 (KEKSEQKKAKKAFQKRRLDKVRRKKEEKAADRLEQELLRDTVK) adopt a coiled-coil conformation. Over residues 162–177 (KAKKAFQKRRLDKVRR) the composition is skewed to basic residues. Serine 233 is subject to Phosphoserine. A coiled-coil region spans residues 247–273 (RQRIVEEERERAVQAYRALKQRQQQLH). The disordered stretch occupies residues 265 to 289 (LKQRQQQLHGERPHLTSRKKPEPQL). Residues 273–289 (HGERPHLTSRKKPEPQL) show a composition bias toward basic and acidic residues.

The protein localises to the chromosome. The protein is Coiled-coil domain-containing protein 137 (CCDC137) of Homo sapiens (Human).